Reading from the N-terminus, the 155-residue chain is UPF0178 protein Amet_2995 (155 aa).

This sequence belongs to the UPF0178 family.

The polypeptide is UPF0178 protein Amet_2995 (Alkaliphilus metalliredigens (strain QYMF)).